The following is a 267-amino-acid chain: Tryptophan synthase alpha chain (267 aa).

Catalysis depends on proton acceptor residues Glu49 and Asp60.

This sequence belongs to the TrpA family. Tetramer of two alpha and two beta chains.

The enzyme catalyses (1S,2R)-1-C-(indol-3-yl)glycerol 3-phosphate + L-serine = D-glyceraldehyde 3-phosphate + L-tryptophan + H2O. Its pathway is amino-acid biosynthesis; L-tryptophan biosynthesis; L-tryptophan from chorismate: step 5/5. In terms of biological role, the alpha subunit is responsible for the aldol cleavage of indoleglycerol phosphate to indole and glyceraldehyde 3-phosphate. This is Tryptophan synthase alpha chain from Pelobacter propionicus (strain DSM 2379 / NBRC 103807 / OttBd1).